The following is a 281-amino-acid chain: 2-hydroxymuconate semialdehyde hydrolase (281 aa).

A disordered region spans residues 30–55; sequence FPALLIHGSGPASPPGPTGAGSFRSS. The 231-residue stretch at 31–261 folds into the AB hydrolase-1 domain; the sequence is PALLIHGSGP…QCGHWTQIEH (231 aa). Residues serine 106, aspartate 227, and histidine 255 contribute to the active site.

The protein belongs to the DmpD/TodF/XylF esterase family.

It carries out the reaction (2Z,4E)-2-hydroxy-6-oxohexa-2,4-dienoate + H2O = 2-oxopent-4-enoate + formate + H(+). The protein operates within aromatic compound metabolism; benzoate degradation via hydroxylation. In terms of biological role, catalyzes the conversion of 2-hydroxymuconate semialdehyde to 2-hydroxypent-2,4-dienoate. This Pseudomonas putida (Arthrobacter siderocapsulatus) protein is 2-hydroxymuconate semialdehyde hydrolase (xylF).